Reading from the N-terminus, the 462-residue chain is L-seryl-tRNA(Sec) selenium transferase (462 aa).

Residue lysine 293 is modified to N6-(pyridoxal phosphate)lysine.

This sequence belongs to the SelA family. Pyridoxal 5'-phosphate serves as cofactor.

Its subcellular location is the cytoplasm. It carries out the reaction L-seryl-tRNA(Sec) + selenophosphate + H(+) = L-selenocysteinyl-tRNA(Sec) + phosphate. Its pathway is aminoacyl-tRNA biosynthesis; selenocysteinyl-tRNA(Sec) biosynthesis; selenocysteinyl-tRNA(Sec) from L-seryl-tRNA(Sec) (bacterial route): step 1/1. Its function is as follows. Converts seryl-tRNA(Sec) to selenocysteinyl-tRNA(Sec) required for selenoprotein biosynthesis. The sequence is that of L-seryl-tRNA(Sec) selenium transferase from Clostridium botulinum (strain Langeland / NCTC 10281 / Type F).